We begin with the raw amino-acid sequence, 885 residues long: Translation initiation factor IF-2 (885 aa).

Disordered regions lie at residues 135 to 159 and 184 to 289; these read KAKAEAEAKAKAEAEAKAKAKAAAE and QAEA…PESM. The segment covering 184 to 232 has biased composition (basic and acidic residues); it reads QAEATKRKQDEEAAKAAEKARLLAEENSKRWAEEERQRLEAERYSDHHI. The span at 253–266 shows a compositional bias: basic residues; it reads GRRARNKNTAKSKR. Basic and acidic residues predominate over residues 267-276; sequence GGKDARDGRE. The region spanning 385 to 554 is the tr-type G domain; it reads PRAPVVTIMG…LLQAEVLELK (170 aa). The tract at residues 394-401 is G1; it reads GHVDHGKT. A GTP-binding site is contributed by 394-401; sequence GHVDHGKT. Residues 419 to 423 are G2; it reads GITQH. Residues 440-443 are G3; sequence DTPG. GTP is bound by residues 440–444 and 494–497; these read DTPGH and NKMD. A G4 region spans residues 494-497; it reads NKMD. The interval 530-532 is G5; it reads SAK.

It belongs to the TRAFAC class translation factor GTPase superfamily. Classic translation factor GTPase family. IF-2 subfamily.

It is found in the cytoplasm. In terms of biological role, one of the essential components for the initiation of protein synthesis. Protects formylmethionyl-tRNA from spontaneous hydrolysis and promotes its binding to the 30S ribosomal subunits. Also involved in the hydrolysis of GTP during the formation of the 70S ribosomal complex. In Shewanella sp. (strain MR-7), this protein is Translation initiation factor IF-2.